We begin with the raw amino-acid sequence, 481 residues long: F-box/FBD/LRR-repeat protein At5g18770 (481 aa).

The F-box domain occupies Glu-23–Asn-69. LRR repeat units lie at residues Lys-126–Ala-153, Cys-159–Asp-185, Val-186–Leu-211, Asp-214–Arg-234, Val-236–Asp-261, Asp-289–Trp-314, and Ala-340–Leu-368. The FBD domain occupies Val-378–Leu-430.

The polypeptide is F-box/FBD/LRR-repeat protein At5g18770 (Arabidopsis thaliana (Mouse-ear cress)).